A 427-amino-acid chain; its full sequence is Enolase (427 aa).

Position 163 (Q163) interacts with (2R)-2-phosphoglycerate. Catalysis depends on E205, which acts as the Proton donor. Positions 242, 285, and 312 each coordinate Mg(2+). The (2R)-2-phosphoglycerate site is built by K337, R366, S367, and K388. The active-site Proton acceptor is the K337.

This sequence belongs to the enolase family. Mg(2+) serves as cofactor.

The protein localises to the cytoplasm. It localises to the secreted. It is found in the cell surface. It catalyses the reaction (2R)-2-phosphoglycerate = phosphoenolpyruvate + H2O. The protein operates within carbohydrate degradation; glycolysis; pyruvate from D-glyceraldehyde 3-phosphate: step 4/5. Catalyzes the reversible conversion of 2-phosphoglycerate (2-PG) into phosphoenolpyruvate (PEP). It is essential for the degradation of carbohydrates via glycolysis. This Albidiferax ferrireducens (strain ATCC BAA-621 / DSM 15236 / T118) (Rhodoferax ferrireducens) protein is Enolase.